A 355-amino-acid chain; its full sequence is MRGVLIAAMVALVVSLLGTPWVIRFFRRQGYGQEIREDGPSSHLTKRGTPTMGGTVIIVATLVGYFLAHLVTGIGFTASGLLVLLVMTGLGIVGFLDDYIKIRKQRSLGLTARMKFTGQAAVALAFGLLAVRFKNHAGLLPGSTYISIVRDTSLTVGIIGFPLLAWIIIAATSNAVNLTDGLDGLAAGTSAMVFGAYVVISFWQFGNLCEPGDSPAGCYAVRDPLDVALVAAAAMGACFGFLWWNASPAKIFMGDTGSLALGGAFASIAIVSRTELLLVVLGGLFVIETLSVMIQVAFFKATKKRVFNMAPIHHHFELAEWPETTVIIRFWIVSGLAVAFGLGLFYAEFLSHGNG.

The next 10 membrane-spanning stretches (helical) occupy residues 3–23, 56–76, 80–100, 120–140, 152–172, 185–205, 224–244, 251–271, 276–296, and 330–350; these read GVLI…PWVI, VIIV…GIGF, GLLV…DDYI, AAVA…AGLL, TSLT…IAAT, LAAG…FWQF, PLDV…FLWW, IFMG…IAIV, LLLV…MIQV, and FWIV…AEFL.

This sequence belongs to the glycosyltransferase 4 family. MraY subfamily. Requires Mg(2+) as cofactor.

It localises to the cell membrane. The enzyme catalyses UDP-N-acetyl-alpha-D-muramoyl-L-alanyl-gamma-D-glutamyl-meso-2,6-diaminopimeloyl-D-alanyl-D-alanine + di-trans,octa-cis-undecaprenyl phosphate = di-trans,octa-cis-undecaprenyl diphospho-N-acetyl-alpha-D-muramoyl-L-alanyl-D-glutamyl-meso-2,6-diaminopimeloyl-D-alanyl-D-alanine + UMP. The protein operates within cell wall biogenesis; peptidoglycan biosynthesis. Catalyzes the initial step of the lipid cycle reactions in the biosynthesis of the cell wall peptidoglycan: transfers peptidoglycan precursor phospho-MurNAc-pentapeptide from UDP-MurNAc-pentapeptide onto the lipid carrier undecaprenyl phosphate, yielding undecaprenyl-pyrophosphoryl-MurNAc-pentapeptide, known as lipid I. In Frankia alni (strain DSM 45986 / CECT 9034 / ACN14a), this protein is Phospho-N-acetylmuramoyl-pentapeptide-transferase.